The primary structure comprises 188 residues: Elongation factor P-like protein (188 aa).

This sequence belongs to the elongation factor P family.

The polypeptide is Elongation factor P-like protein (Aliivibrio fischeri (strain MJ11) (Vibrio fischeri)).